The primary structure comprises 333 residues: tRNA N6-adenosine threonylcarbamoyltransferase (333 aa).

Residues H111 and H115 each coordinate Fe cation. Residues 134 to 138, D167, G180, D184, and N269 each bind substrate; that span reads VVSGG. D297 contacts Fe cation.

It belongs to the KAE1 / TsaD family. Fe(2+) serves as cofactor.

It is found in the cytoplasm. The enzyme catalyses L-threonylcarbamoyladenylate + adenosine(37) in tRNA = N(6)-L-threonylcarbamoyladenosine(37) in tRNA + AMP + H(+). Its function is as follows. Required for the formation of a threonylcarbamoyl group on adenosine at position 37 (t(6)A37) in tRNAs that read codons beginning with adenine. Is involved in the transfer of the threonylcarbamoyl moiety of threonylcarbamoyl-AMP (TC-AMP) to the N6 group of A37, together with TsaE and TsaB. TsaD likely plays a direct catalytic role in this reaction. In Carboxydothermus hydrogenoformans (strain ATCC BAA-161 / DSM 6008 / Z-2901), this protein is tRNA N6-adenosine threonylcarbamoyltransferase.